The sequence spans 338 residues: tRNA N6-adenosine threonylcarbamoyltransferase (338 aa).

The Fe cation site is built by histidine 109 and histidine 113. Substrate-binding positions include 132-136, aspartate 165, glycine 178, and asparagine 277; that span reads AISGA. A Fe cation-binding site is contributed by aspartate 302.

This sequence belongs to the KAE1 / TsaD family. Fe(2+) serves as cofactor.

It is found in the cytoplasm. It carries out the reaction L-threonylcarbamoyladenylate + adenosine(37) in tRNA = N(6)-L-threonylcarbamoyladenosine(37) in tRNA + AMP + H(+). Required for the formation of a threonylcarbamoyl group on adenosine at position 37 (t(6)A37) in tRNAs that read codons beginning with adenine. Is involved in the transfer of the threonylcarbamoyl moiety of threonylcarbamoyl-AMP (TC-AMP) to the N6 group of A37, together with TsaE and TsaB. TsaD likely plays a direct catalytic role in this reaction. The protein is tRNA N6-adenosine threonylcarbamoyltransferase of Chlamydia trachomatis serovar A (strain ATCC VR-571B / DSM 19440 / HAR-13).